The sequence spans 228 residues: Max-interacting protein 1 (228 aa).

Disordered stretches follow at residues tyrosine 30–glutamate 76 and serine 160–serine 228. A compositionally biased stretch (basic residues) spans glutamine 43–lysine 56. A compositionally biased stretch (polar residues) spans histidine 57–serine 70. The 53-residue stretch at alanine 67–leucine 119 folds into the bHLH domain. Residues glutamate 173–serine 183 show a composition bias toward acidic residues. Positions serine 207–serine 228 are enriched in polar residues.

As to quaternary structure, efficient DNA binding requires dimerization with another bHLH protein. Binds DNA as a heterodimer with MAX. Interacts with SMC3. Interacts with RNF17.

It is found in the nucleus. Its function is as follows. Transcriptional repressor. MXI1 binds with MAX to form a sequence-specific DNA-binding protein complex which recognizes the core sequence 5'-CAC[GA]TG-3'. MXI1 thus antagonizes MYC transcriptional activity by competing for MAX. Isoform Short, which lacks a segment, has a much stronger suppressive potential and associates with a SIN3 homologous protein. The protein is Max-interacting protein 1 (Mxi1) of Mus musculus (Mouse).